Here is a 446-residue protein sequence, read N- to C-terminus: Actin-related protein 6 (446 aa).

Positions 1–11 (MTGRGGAKKSR) are enriched in basic residues. The interval 1-24 (MTGRGGAKKSRAAGPAPPTTTLVL) is disordered.

This sequence belongs to the actin family. ARP6 subfamily. As to quaternary structure, component of the SWR1 chromatin remodeling complex.

It is found in the cytoplasm. The protein resides in the cytoskeleton. It localises to the nucleus. Component of the SWR1 complex which mediates the ATP-dependent exchange of histone H2A for the H2A variant H2A.Z leading to transcriptional regulation of selected genes by chromatin remodeling. Involved in chromosome stability. In Neurospora crassa (strain ATCC 24698 / 74-OR23-1A / CBS 708.71 / DSM 1257 / FGSC 987), this protein is Actin-related protein 6 (arp-6).